A 361-amino-acid polypeptide reads, in one-letter code: Chorismate synthase (361 aa).

NADP(+)-binding residues include Arg-48 and Arg-54. FMN is bound by residues 125 to 127 (RSS), 238 to 239 (NA), Gly-278, 293 to 297 (KPTSS), and Arg-319.

It belongs to the chorismate synthase family. As to quaternary structure, homotetramer. Requires FMNH2 as cofactor.

The catalysed reaction is 5-O-(1-carboxyvinyl)-3-phosphoshikimate = chorismate + phosphate. Its pathway is metabolic intermediate biosynthesis; chorismate biosynthesis; chorismate from D-erythrose 4-phosphate and phosphoenolpyruvate: step 7/7. In terms of biological role, catalyzes the anti-1,4-elimination of the C-3 phosphate and the C-6 proR hydrogen from 5-enolpyruvylshikimate-3-phosphate (EPSP) to yield chorismate, which is the branch point compound that serves as the starting substrate for the three terminal pathways of aromatic amino acid biosynthesis. This reaction introduces a second double bond into the aromatic ring system. The polypeptide is Chorismate synthase (Vibrio cholerae serotype O1 (strain ATCC 39541 / Classical Ogawa 395 / O395)).